We begin with the raw amino-acid sequence, 387 residues long: Exodeoxyribonuclease 7 large subunit (387 aa).

The protein belongs to the XseA family. Heterooligomer composed of large and small subunits.

Its subcellular location is the cytoplasm. The enzyme catalyses Exonucleolytic cleavage in either 5'- to 3'- or 3'- to 5'-direction to yield nucleoside 5'-phosphates.. Its function is as follows. Bidirectionally degrades single-stranded DNA into large acid-insoluble oligonucleotides, which are then degraded further into small acid-soluble oligonucleotides. In Synechococcus sp. (strain CC9902), this protein is Exodeoxyribonuclease 7 large subunit.